We begin with the raw amino-acid sequence, 213 residues long: Octanoyltransferase (213 aa).

A BPL/LPL catalytic domain is found at Thr36–Leu211. Substrate contacts are provided by residues Arg75–His82, Ser142–Gly144, and Gly155–Ala157. Residue Cys173 is the Acyl-thioester intermediate of the active site.

It belongs to the LipB family.

It localises to the cytoplasm. The enzyme catalyses octanoyl-[ACP] + L-lysyl-[protein] = N(6)-octanoyl-L-lysyl-[protein] + holo-[ACP] + H(+). It participates in protein modification; protein lipoylation via endogenous pathway; protein N(6)-(lipoyl)lysine from octanoyl-[acyl-carrier-protein]: step 1/2. Its function is as follows. Catalyzes the transfer of endogenously produced octanoic acid from octanoyl-acyl-carrier-protein onto the lipoyl domains of lipoate-dependent enzymes. Lipoyl-ACP can also act as a substrate although octanoyl-ACP is likely to be the physiological substrate. The sequence is that of Octanoyltransferase from Photorhabdus laumondii subsp. laumondii (strain DSM 15139 / CIP 105565 / TT01) (Photorhabdus luminescens subsp. laumondii).